Consider the following 207-residue polypeptide: Ribosomal RNA small subunit methyltransferase G (207 aa).

S-adenosyl-L-methionine is bound by residues glycine 73, leucine 78, 124–125, and arginine 139; that span reads VE.

Belongs to the methyltransferase superfamily. RNA methyltransferase RsmG family.

The protein localises to the cytoplasm. It carries out the reaction guanosine(527) in 16S rRNA + S-adenosyl-L-methionine = N(7)-methylguanosine(527) in 16S rRNA + S-adenosyl-L-homocysteine. Specifically methylates the N7 position of guanine in position 527 of 16S rRNA. This chain is Ribosomal RNA small subunit methyltransferase G, found in Escherichia fergusonii (strain ATCC 35469 / DSM 13698 / CCUG 18766 / IAM 14443 / JCM 21226 / LMG 7866 / NBRC 102419 / NCTC 12128 / CDC 0568-73).